The sequence spans 141 residues: uncharacterized protein (141 aa).

The tract at residues 1 to 61 is disordered; the sequence is IRLLHSLTPP…PPPPPPPRRA (61 aa). Positions 8-58 are enriched in pro residues; it reads TPPPPPPPPPPPPPPPPPPPPPPPPPPPPPPPPPPPPPPPPPPPPPPPPPP. The segment at residues 98–116 is a DNA-binding region (H-T-H motif); that stretch reads KRLLVAYPVRHFLSAACQF.

This is an uncharacterized protein from Owenia fusiformis (Polychaete worm).